The following is an 88-amino-acid chain: Augerpeptide Hhe9a (88 aa).

Residues 1–21 form the signal peptide; that stretch reads MMTKTGLVLLFAFLLVFPVSS. A propeptide spanning residues 22–49 is cleaved from the precursor; sequence LPMDAEAGHARLEMDKRDAGNEAWTRLL. 3 disulfides stabilise this stretch: Cys56/Cys71, Cys61/Cys73, and Cys67/Cys86.

In terms of tissue distribution, expressed by the venom duct.

Its subcellular location is the secreted. This Hastula hectica (Sea snail) protein is Augerpeptide Hhe9a.